The primary structure comprises 449 residues: Glucose-6-phosphate isomerase (449 aa).

Residue Glu291 is the Proton donor of the active site. Active-site residues include His312 and Lys426.

The protein belongs to the GPI family.

The protein resides in the cytoplasm. The catalysed reaction is alpha-D-glucose 6-phosphate = beta-D-fructose 6-phosphate. Its pathway is carbohydrate biosynthesis; gluconeogenesis. The protein operates within carbohydrate degradation; glycolysis; D-glyceraldehyde 3-phosphate and glycerone phosphate from D-glucose: step 2/4. Functionally, catalyzes the reversible isomerization of glucose-6-phosphate to fructose-6-phosphate. In Streptococcus equi subsp. zooepidemicus (strain MGCS10565), this protein is Glucose-6-phosphate isomerase.